A 146-amino-acid chain; its full sequence is Protein MGF 100-3L (146 aa).

This sequence belongs to the asfivirus MGF 100 family.

In terms of biological role, plays a role in virus cell tropism, and may be required for efficient virus replication in macrophages. In Ornithodoros (relapsing fever ticks), this protein is Protein MGF 100-3L.